The chain runs to 477 residues: Glycogen synthase (477 aa).

Lysine 15 contributes to the ADP-alpha-D-glucose binding site.

The protein belongs to the glycosyltransferase 1 family. Bacterial/plant glycogen synthase subfamily.

It carries out the reaction [(1-&gt;4)-alpha-D-glucosyl](n) + ADP-alpha-D-glucose = [(1-&gt;4)-alpha-D-glucosyl](n+1) + ADP + H(+). Its pathway is glycan biosynthesis; glycogen biosynthesis. In terms of biological role, synthesizes alpha-1,4-glucan chains using ADP-glucose. This is Glycogen synthase from Anaeromyxobacter dehalogenans (strain 2CP-1 / ATCC BAA-258).